A 148-amino-acid polypeptide reads, in one-letter code: Large ribosomal subunit protein uL15 (148 aa).

The span at 1–28 (MIRRRKKVRKLRGSHTHGWGCKKKHRGG) shows a compositional bias: basic residues. The disordered stretch occupies residues 1 to 43 (MIRRRKKVRKLRGSHTHGWGCKKKHRGGGSKGGRGMAGTGKRK). Over residues 29 to 38 (GSKGGRGMAG) the composition is skewed to gly residues.

It belongs to the universal ribosomal protein uL15 family. In terms of assembly, part of the 50S ribosomal subunit.

Functionally, binds to the 23S rRNA. The sequence is that of Large ribosomal subunit protein uL15 from Thermococcus kodakarensis (strain ATCC BAA-918 / JCM 12380 / KOD1) (Pyrococcus kodakaraensis (strain KOD1)).